The chain runs to 415 residues: Dibenzothiophene monooxygenase (415 aa).

Residues tyrosine 94, 127–132 (NASSEN), 157–161 (KHFSS), arginine 280, 365–366 (IG), and threonine 387 contribute to the FMN site. The lid loop stretch occupies residues 129–140 (SSENNSHILDWK).

The protein belongs to the DszC flavin monooxygenase family. In terms of assembly, homotetramer.

Its subcellular location is the cytoplasm. The catalysed reaction is dibenzothiophene + 2 FMNH2 + 2 O2 = dibenzothiophene 5,5-dioxide + 2 FMN + 2 H2O + 2 H(+). The enzyme catalyses dibenzothiophene + FMNH2 + O2 = dibenzothiophene 5-oxide + FMN + H2O + H(+). It catalyses the reaction dibenzothiophene 5-oxide + FMNH2 + O2 = dibenzothiophene 5,5-dioxide + FMN + H2O + H(+). It participates in sulfur metabolism; dibenzothiophene degradation. Inhibited at high concentrations of FMN or FAD. Its function is as follows. Catalyzes the first step of the '4S' desulfurization pathway that removes covalently bound sulfur from dibenzothiophene (DBT) without breaking carbon-carbon bonds. Sulfur dioxygenase which converts DBT to DBT-sulfone (DBTO2 or DBT 5,5-dioxide) probably in a stepwise manner. In addition to FMNH2 can also use FAD (although FAD is less efficient). The sequence is that of Dibenzothiophene monooxygenase from Mycolicibacterium goodii (Mycobacterium goodii).